Consider the following 68-residue polypeptide: Conotoxin reg3.14 (68 aa).

Positions 1–22 are cleaved as a signal peptide; it reads MMSKLGVLLTICLLLFPLSVLP. Residues 23-52 constitute a propeptide that is removed on maturation; the sequence is LDGDQPADQPAERMQDISAEQNPWFDPVKR. Intrachain disulfides connect cysteine 53–cysteine 68, cysteine 54–cysteine 64, and cysteine 59–cysteine 67.

Belongs to the conotoxin M superfamily. In terms of tissue distribution, expressed by the venom duct.

It localises to the secreted. The chain is Conotoxin reg3.14 from Conus regius (Crown cone).